Reading from the N-terminus, the 487-residue chain is Malonate-semialdehyde dehydrogenase (487 aa).

7 residues coordinate NAD(+): A150, F152, K176, E179, R180, S229, and T251. The active-site Nucleophile is the C284. Residue E382 participates in NAD(+) binding.

Belongs to the aldehyde dehydrogenase family. IolA subfamily. As to quaternary structure, homotetramer.

It catalyses the reaction 3-oxopropanoate + NAD(+) + CoA + H2O = hydrogencarbonate + acetyl-CoA + NADH + H(+). It carries out the reaction 2-methyl-3-oxopropanoate + NAD(+) + CoA + H2O = propanoyl-CoA + hydrogencarbonate + NADH + H(+). It participates in polyol metabolism; myo-inositol degradation into acetyl-CoA; acetyl-CoA from myo-inositol: step 7/7. Catalyzes the oxidation of malonate semialdehyde (MSA) and methylmalonate semialdehyde (MMSA) into acetyl-CoA and propanoyl-CoA, respectively. Is involved in a myo-inositol catabolic pathway. Bicarbonate, and not CO2, is the end-product of the enzymatic reaction. The polypeptide is Malonate-semialdehyde dehydrogenase (Bacillus subtilis subsp. natto).